A 583-amino-acid chain; its full sequence is AP-1-like transcription factor YAP1 (583 aa).

The interval 1–86 is disordered; sequence MSTSTAKRPF…KELEDKVSQL (86 aa). Residues 8 to 17 are compositionally biased toward basic and acidic residues; it reads RPFDNKRAGS. Low complexity predominate over residues 24-36; sequence SDSGGNNSGSSPA. Basic residues predominate over residues 37 to 46; that stretch reads SKRRERKPGR. The short motif at 41–48 is the Bipartite nuclear localization signal element; it reads ERKPGRKP. 2 stretches are compositionally biased toward basic and acidic residues: residues 47–58 and 67–84; these read KPLETEAKDKRT and AFRE…DKVS. The 64-residue stretch at 51-114 folds into the bZIP domain; that stretch reads TEAKDKRTAQ…TNLLSELKRY (64 aa). The tract at residues 54-77 is basic motif; that stretch reads KDKRTAQNRAAQRAFRERRERKMK. The interval 79 to 86 is leucine-zipper; that stretch reads LEDKVSQL. The short motif at 120 to 127 is the Bipartite nuclear localization signal element; it reads KKRDSILL. Low complexity predominate over residues 177–195; the sequence is SKIPSPSSDSTSPSASTSI. Residues 177–233 are disordered; it reads SKIPSPSSDSTSPSASTSILDNANNKSVSSTNLNHSRSSISNSSSSPSNVNGLSSRK. Positions 196 to 207 are enriched in polar residues; sequence LDNANNKSVSST. The segment covering 208-230 has biased composition (low complexity); the sequence is NLNHSRSSISNSSSSPSNVNGLS. Positions 265-272 are n-CRD; the sequence is CSKLSMAC. 2 disulfides stabilise this stretch: cysteine 265-cysteine 531 and cysteine 272-cysteine 562. Disordered stretches follow at residues 275–329 and 350–373; these read KSNP…SASA and QYND…VSAW. A compositionally biased stretch (low complexity) spans 297-312; the sequence is KSNSNVNITNHNNNKI. Positions 316-329 are enriched in polar residues; the sequence is DLSSSAPLHDSASA. Residues 531–562 form a c-CRD region; it reads CSEVWDRITAHPRYSDLDIDGLCLELRTKAKC. A Nuclear export signal motif is present at residues 547 to 554; that stretch reads LDIDGLCL.

It belongs to the bZIP family. YAP subfamily. Oxidative stress induces conformational changes through oxidation of cysteine residues, masking the nuclear export signal, thus abolishing nuclear export by CRM1/exportin 1.

Its subcellular location is the nucleus. It localises to the cytoplasm. Functionally, transcription activator involved in oxidative stress response and cadmium resistance. Regulates the transcription of genes encoding antioxidant enzymes and components of the cellular thiol-reducing pathways. Activity of the transcription factor is controlled through oxidation of specific cysteine residues resulting in the alteration of its subcellular location. Activation by alkyl hydroperoxides or cadmium induces nuclear accumulation and as a result YAP1 transcriptional activity. The sequence is that of AP-1-like transcription factor YAP1 (YAP1) from Kluyveromyces lactis (strain ATCC 8585 / CBS 2359 / DSM 70799 / NBRC 1267 / NRRL Y-1140 / WM37) (Yeast).